Consider the following 180-residue polypeptide: Large ribosomal subunit protein uL6 (180 aa).

It belongs to the universal ribosomal protein uL6 family. As to quaternary structure, part of the 50S ribosomal subunit.

In terms of biological role, this protein binds to the 23S rRNA, and is important in its secondary structure. It is located near the subunit interface in the base of the L7/L12 stalk, and near the tRNA binding site of the peptidyltransferase center. In Christiangramia forsetii (strain DSM 17595 / CGMCC 1.15422 / KT0803) (Gramella forsetii), this protein is Large ribosomal subunit protein uL6.